A 183-amino-acid polypeptide reads, in one-letter code: Disulfide bond formation protein B 2 (183 aa).

At 1–9 (MSLACSRSL) the chain is on the cytoplasmic side. A helical membrane pass occupies residues 10–26 (FFMAFTAGILALGASYY). At 27–44 (LEYAVGLVPCSLCLVQRL) the chain is on the periplasmic side. Cysteines 36 and 39 form a disulfide. The chain crosses the membrane as a helical span at residues 45-61 (FMSVLTLCCGLAAVHGP). The Cytoplasmic portion of the chain corresponds to 62-68 (QRVGLSL). A helical membrane pass occupies residues 69 to 85 (YWMVTLLSSLGGTTAAW). Residues 86-142 (RQVLFQSDSLQELAHCAPNPEEMFSSLPWLCALMRMFNDTADCAELSWTLFDLSIPE) are Periplasmic-facing. A disulfide bridge connects residues Cys-101 and Cys-128. Residues 143–161 (WSLLFFVGMSILAVYQLLR) traverse the membrane as a helical segment. Topologically, residues 162-183 (QVWMALQRPLSGQPSHPALVRD) are cytoplasmic.

Belongs to the DsbB family.

Its subcellular location is the cell inner membrane. In terms of biological role, required for disulfide bond formation in some periplasmic proteins. Acts by oxidizing the DsbA protein. The chain is Disulfide bond formation protein B 2 from Pseudomonas fluorescens (strain Pf0-1).